A 115-amino-acid chain; its full sequence is Dolichyl-diphosphooligosaccharide--protein glycosyltransferase subunit DAD1 (115 aa).

Residues 1-31 (MVKSTSKDAQDLFRSLRSAYSATPTNLKIID) lie on the Cytoplasmic side of the membrane. The chain crosses the membrane as a helical span at residues 32–52 (LYVVFAVFTALIQVVYMALVG). Residues 53 to 55 (SFP) lie on the Lumenal side of the membrane. The chain crosses the membrane as a helical span at residues 56-76 (FNSFLSGVLSCIGTAVLAVCL). The Cytoplasmic segment spans residues 77-94 (RIQVNKENKEFKDLAPER). The chain crosses the membrane as a helical span at residues 95-115 (AFADFVLCNLVLHLVIINFLG).

It belongs to the DAD/OST2 family. Component of the oligosaccharyltransferase (OST) complex. Ubiquitous.

It localises to the endoplasmic reticulum membrane. Its pathway is protein modification; protein glycosylation. Functionally, subunit of the oligosaccharyl transferase (OST) complex that catalyzes the initial transfer of a defined glycan (Glc(3)Man(9)GlcNAc(2) in eukaryotes) from the lipid carrier dolichol-pyrophosphate to an asparagine residue within an Asn-X-Ser/Thr consensus motif in nascent polypeptide chains, the first step in protein N-glycosylation. N-glycosylation occurs cotranslationally and the complex associates with the Sec61 complex at the channel-forming translocon complex that mediates protein translocation across the endoplasmic reticulum (ER). All subunits are required for a maximal enzyme activity. The polypeptide is Dolichyl-diphosphooligosaccharide--protein glycosyltransferase subunit DAD1 (DAD1) (Arabidopsis thaliana (Mouse-ear cress)).